The chain runs to 631 residues: Golgin subfamily A member 8A (631 aa).

Basic and acidic residues predominate over residues 1–20 (MLPVDGEERKSEGSDTEGDR). Disordered regions lie at residues 1–103 (MLPV…QEQA), 127–154 (KKQVEHQLEEEKKANNEKQKAERELEGQ), 426–447 (TSAEKEPEAAVPASGTGGESSG), and 488–520 (PGDSAKDASPGGGHHQAGPGQGGEEGEAAGAAG). Residues 78 to 92 (SLYLSPKSSSASSSL) are compositionally biased toward low complexity. Positions 93 to 103 (HARQSPCQEQA) are enriched in polar residues. The stretch at 110–468 (SIKISRLNDT…REHVEKLELG (359 aa)) forms a coiled coil. Basic and acidic residues predominate over residues 128-152 (KQVEHQLEEEKKANNEKQKAERELE). Positions 497–510 (PGGGHHQAGPGQGG) are enriched in gly residues. The golgi-targeting domain stretch occupies residues 519–631 (AGDGVAACGS…CWAWLPRRRR (113 aa)).

Belongs to the GOLGA8 family.

It localises to the golgi apparatus. The protein localises to the golgi stack membrane. Its function is as follows. May be involved in maintaining Golgi structure. The polypeptide is Golgin subfamily A member 8A (GOLGA8A) (Homo sapiens (Human)).